The primary structure comprises 191 residues: MAWPCISRLCCLARRWNQLDRSDVAVPLTLHGYSDPGSEESGADCSVSRGNPSVAGARESSRAVPLTQYQRDFGVRTARAGSRDAAQERPSGPGGRRGQSSAPPTRTVYVLPVGDADAAVVATTSYRQEFQAWTGVKPSRSTKARTARVVTTHSSGWDPSPGASFQVPEVRKFTPNPSAIFQTSAPQTLNV.

Residues C5, C10, and C11 are each lipidated (S-palmitoyl cysteine). A disordered region spans residues 31–106 (HGYSDPGSEE…RGQSSAPPTR (76 aa)). Phosphoserine occurs at positions 38 and 41. Mn stretches follow at residues 123–136 (TTSYRQEFQAWTGV) and 158–170 (DPSPGASFQVPEV). S160 bears the Phosphoserine mark.

The protein belongs to the STOP family. Interacts with calmodulin. Palmitoylated. Palmitoylation enhances association with microtubules. Expressed in brain. Found in neurons in primary cultures, but absent in glial cells.

The protein localises to the golgi apparatus. Its subcellular location is the cytoplasm. It localises to the cytoskeleton. May have microtubule-stabilizing activity. The sequence is that of MAP6 domain-containing protein 1 (Map6d1) from Mus musculus (Mouse).